Consider the following 443-residue polypeptide: Probable glycine dehydrogenase (decarboxylating) subunit 1 (443 aa).

Belongs to the GcvP family. N-terminal subunit subfamily. In terms of assembly, the glycine cleavage system is composed of four proteins: P, T, L and H. In this organism, the P 'protein' is a heterodimer of two subunits.

It carries out the reaction N(6)-[(R)-lipoyl]-L-lysyl-[glycine-cleavage complex H protein] + glycine + H(+) = N(6)-[(R)-S(8)-aminomethyldihydrolipoyl]-L-lysyl-[glycine-cleavage complex H protein] + CO2. Its function is as follows. The glycine cleavage system catalyzes the degradation of glycine. The P protein binds the alpha-amino group of glycine through its pyridoxal phosphate cofactor; CO(2) is released and the remaining methylamine moiety is then transferred to the lipoamide cofactor of the H protein. The chain is Probable glycine dehydrogenase (decarboxylating) subunit 1 from Koribacter versatilis (strain Ellin345).